The chain runs to 354 residues: Tyrosine recombinase XerH (354 aa).

The 87-residue stretch at 48–134 folds into the Core-binding (CB) domain; sequence LTKGVKNIDE…AVINFFDFLD (87 aa). In terms of domain architecture, Tyr recombinase spans 163–346; that stretch reads KLPEFMSKEE…DNDKLKLAAQ (184 aa). Catalysis depends on residues Arg-205, Lys-231, His-298, Arg-301, and His-324. Tyr-333 (O-(3'-phospho-DNA)-tyrosine intermediate) is an active-site residue.

This sequence belongs to the 'phage' integrase family. XerH subfamily.

Its subcellular location is the cytoplasm. With respect to regulation, ftsK is required for efficient recombination. Site-specific tyrosine recombinase, which acts by catalyzing the cutting and rejoining of the recombining DNA molecules. Binds to the complete atypical dif motif (difH) site and to both halves separately. This Campylobacter jejuni subsp. jejuni serotype O:2 (strain ATCC 700819 / NCTC 11168) protein is Tyrosine recombinase XerH.